The chain runs to 597 residues: Elongation factor 4 (597 aa).

The region spanning 2-184 (DHIRNFSIIA…SLIAKVPPPK (183 aa)) is the tr-type G domain. Residues 14-19 (DHGKST) and 131-134 (NKID) each bind GTP.

It belongs to the TRAFAC class translation factor GTPase superfamily. Classic translation factor GTPase family. LepA subfamily.

It localises to the cell inner membrane. The catalysed reaction is GTP + H2O = GDP + phosphate + H(+). Its function is as follows. Required for accurate and efficient protein synthesis under certain stress conditions. May act as a fidelity factor of the translation reaction, by catalyzing a one-codon backward translocation of tRNAs on improperly translocated ribosomes. Back-translocation proceeds from a post-translocation (POST) complex to a pre-translocation (PRE) complex, thus giving elongation factor G a second chance to translocate the tRNAs correctly. Binds to ribosomes in a GTP-dependent manner. In Burkholderia pseudomallei (strain 1710b), this protein is Elongation factor 4.